We begin with the raw amino-acid sequence, 623 residues long: Xaa-Pro aminopeptidase 1 (623 aa).

R77 is an a peptide binding site. The residue at position 304 (K304) is an N6-acetyllysine. Residue H395 participates in a peptide binding. Residues D415, D426, and H489 each coordinate Mn(2+). A peptide contacts are provided by H489, H498, and E523. Mn(2+) contacts are provided by E523 and E537.

Belongs to the peptidase M24B family. In terms of assembly, homodimer. Mn(2+) is required as a cofactor.

The protein resides in the cytoplasm. Its subcellular location is the cytosol. It carries out the reaction Release of any N-terminal amino acid, including proline, that is linked to proline, even from a dipeptide or tripeptide.. In terms of biological role, metalloaminopeptidase that catalyzes the removal of a penultimate prolyl residue from the N-termini of peptides, such as Arg-Pro-Pro. Contributes to the degradation of bradykinin. The chain is Xaa-Pro aminopeptidase 1 (XPNPEP1) from Bos taurus (Bovine).